Here is a 27-residue protein sequence, read N- to C-terminus: MIIGAVEAGGTKFVDGVGNEKGEIFER.

This sequence belongs to the ROK (NagC/XylR) family. Homodimer. Mg(2+) is required as a cofactor.

It carries out the reaction D-fructose + ATP = D-fructose 6-phosphate + ADP + H(+). With respect to regulation, inhibition by zinc ions. The protein is Fructokinase of Fusobacterium mortiferum.